A 196-amino-acid chain; its full sequence is Probable malonic semialdehyde reductase RutE (196 aa).

It belongs to the nitroreductase family. HadB/RutE subfamily. Requires FMN as cofactor.

It catalyses the reaction 3-hydroxypropanoate + NADP(+) = 3-oxopropanoate + NADPH + H(+). Functionally, may reduce toxic product malonic semialdehyde to 3-hydroxypropionic acid, which is excreted. This chain is Probable malonic semialdehyde reductase RutE, found in Yersinia enterocolitica serotype O:8 / biotype 1B (strain NCTC 13174 / 8081).